Consider the following 427-residue polypeptide: MSNVVIMGAQWGDEGKGKIVDLLSREIDVIVRFQGGNNAGHTVIVGDKSYILHLIPSGILHEGKTCLIGNGVVLDPVVFWKEVEALAERGIDVGPQRLMISRKAHVIMPYHKALDVAREDFKNKESRIGTTGRGIGPCYEDKMSRIGVRAGDLADPALLRSKIEAALVEKNALFTALYGREAMSVDAVFDEVMAVGGRLVPYLTDVSSVIEDAWANDSGVMFEGAQGTHLDIDHGTYPFVTSSNTVAGNAAAGSGIPASRLDRVVAIVKAYTTRVGAGPFPTELDDEAGNHMQSVGHEFGATTGRKRRCGWLDCALLRESVRLNGPTDIALTKLDVMSGLKELKICVAYEYNGQRLQHPPQEQNGLAHVTPVYETMPGWDDDITAAKTWEDLPEAARNYICRIEELLGVPVSMISVGPERDQTLNRK.

Residues 12-18 and 40-42 each bind GTP; these read GDEGKGK and GHT. Asp13 (proton acceptor) is an active-site residue. Asp13 and Gly40 together coordinate Mg(2+). IMP contacts are provided by residues 13-16, 38-41, Thr131, Arg145, Gln226, Thr241, and Arg305; these read DEGK and NAGH. His41 functions as the Proton donor in the catalytic mechanism. 301 to 307 lines the substrate pocket; that stretch reads ATTGRKR. Residues Arg307, 333–335, and 415–417 contribute to the GTP site; these read KLD and SVG.

Belongs to the adenylosuccinate synthetase family. As to quaternary structure, homodimer. Requires Mg(2+) as cofactor.

The protein resides in the cytoplasm. It carries out the reaction IMP + L-aspartate + GTP = N(6)-(1,2-dicarboxyethyl)-AMP + GDP + phosphate + 2 H(+). It participates in purine metabolism; AMP biosynthesis via de novo pathway; AMP from IMP: step 1/2. In terms of biological role, plays an important role in the de novo pathway of purine nucleotide biosynthesis. Catalyzes the first committed step in the biosynthesis of AMP from IMP. This Oleidesulfovibrio alaskensis (strain ATCC BAA-1058 / DSM 17464 / G20) (Desulfovibrio alaskensis) protein is Adenylosuccinate synthetase.